A 393-amino-acid polypeptide reads, in one-letter code: Pectate lyase A (393 aa).

The N-terminal stretch at 1 to 32 (MMNKASGRSFTRSSKYLLATLIAGMMASGVSA) is a signal peptide. E174, D176, D216, and D220 together coordinate Ca(2+). R273 is a catalytic residue. A disulfide bond links C330 and C358.

The protein belongs to the polysaccharide lyase 1 family. PLADES subfamily. The cofactor is Ca(2+).

The protein localises to the secreted. The enzyme catalyses Eliminative cleavage of (1-&gt;4)-alpha-D-galacturonan to give oligosaccharides with 4-deoxy-alpha-D-galact-4-enuronosyl groups at their non-reducing ends.. Its pathway is glycan metabolism; pectin degradation; 2-dehydro-3-deoxy-D-gluconate from pectin: step 2/5. Its function is as follows. Involved in maceration and soft-rotting of plant tissue. In Dickeya chrysanthemi (Pectobacterium chrysanthemi), this protein is Pectate lyase A (pelA).